The primary structure comprises 341 residues: Phenylalanine--tRNA ligase alpha subunit (341 aa).

Mg(2+) is bound at residue Glu254.

This sequence belongs to the class-II aminoacyl-tRNA synthetase family. Phe-tRNA synthetase alpha subunit type 1 subfamily. In terms of assembly, tetramer of two alpha and two beta subunits. Mg(2+) is required as a cofactor.

It is found in the cytoplasm. The catalysed reaction is tRNA(Phe) + L-phenylalanine + ATP = L-phenylalanyl-tRNA(Phe) + AMP + diphosphate + H(+). This chain is Phenylalanine--tRNA ligase alpha subunit, found in Chlorobaculum tepidum (strain ATCC 49652 / DSM 12025 / NBRC 103806 / TLS) (Chlorobium tepidum).